A 202-amino-acid chain; its full sequence is GTP cyclohydrolase-2 (202 aa).

Residue 48–52 coordinates GTP; it reads RLHSE. Zn(2+) contacts are provided by C53, C64, and C66. Residues Q69, 91–93, and T113 contribute to the GTP site; that span reads EGR. Residue D125 is the Proton acceptor of the active site. The active-site Nucleophile is the R127. Positions 148 and 153 each coordinate GTP.

It belongs to the GTP cyclohydrolase II family. Zn(2+) is required as a cofactor.

The catalysed reaction is GTP + 4 H2O = 2,5-diamino-6-hydroxy-4-(5-phosphoribosylamino)-pyrimidine + formate + 2 phosphate + 3 H(+). The protein operates within cofactor biosynthesis; riboflavin biosynthesis; 5-amino-6-(D-ribitylamino)uracil from GTP: step 1/4. Its function is as follows. Catalyzes the conversion of GTP to 2,5-diamino-6-ribosylamino-4(3H)-pyrimidinone 5'-phosphate (DARP), formate and pyrophosphate. In Colwellia psychrerythraea (strain 34H / ATCC BAA-681) (Vibrio psychroerythus), this protein is GTP cyclohydrolase-2.